The primary structure comprises 581 residues: FAD-linked oxidoreductase easE (581 aa).

The first 25 residues, 1–25, serve as a signal peptide directing secretion; the sequence is MYRLLGPLACLALAWFFTWAPSGRC. Asn44 and Asn73 each carry an N-linked (GlcNAc...) asparagine glycan. An FAD-binding PCMH-type domain is found at 122-306; the sequence is HQGRIPLYSA…AQATIRVFPD (185 aa). Asn369 carries N-linked (GlcNAc...) asparagine glycosylation.

The protein belongs to the oxygen-dependent FAD-linked oxidoreductase family. FAD is required as a cofactor.

It participates in alkaloid biosynthesis; ergot alkaloid biosynthesis. In terms of biological role, FAD-linked oxidoreductase; part of the gene cluster that mediates the biosynthesis of fungal ergot alkaloid. DmaW catalyzes the first step of ergot alkaloid biosynthesis by condensing dimethylallyl diphosphate (DMAP) and tryptophan to form 4-dimethylallyl-L-tryptophan. The second step is catalyzed by the methyltransferase easF that methylates 4-dimethylallyl-L-tryptophan in the presence of S-adenosyl-L-methionine, resulting in the formation of 4-dimethylallyl-L-abrine. The catalase easC and the FAD-dependent oxidoreductase easE then transform 4-dimethylallyl-L-abrine to chanoclavine-I which is further oxidized by easD in the presence of NAD(+), resulting in the formation of chanoclavine-I aldehyde. Agroclavine dehydrogenase easG then mediates the conversion of chanoclavine-I aldehyde to agroclavine via a non-enzymatic adduct reaction: the substrate is an iminium intermediate that is formed spontaneously from chanoclavine-I aldehyde in the presence of glutathione. Further conversion of agroclavine to paspalic acid is a two-step process involving oxidation of agroclavine to elymoclavine and of elymoclavine to paspalic acid, the second step being performed by the elymoclavine oxidase cloA. However, cloA does not encode a functional enzyme indicating that C.fusiformis terminates its ergot alkaloid pathway at elymoclavine. The protein is FAD-linked oxidoreductase easE of Claviceps fusiformis (Ergot fungus).